The following is a 267-amino-acid chain: 5'-nucleotidase SurE (267 aa).

A divalent metal cation is bound by residues Asp-9, Asp-10, Ser-40, and Asn-97.

It belongs to the SurE nucleotidase family. It depends on a divalent metal cation as a cofactor.

It localises to the cytoplasm. It catalyses the reaction a ribonucleoside 5'-phosphate + H2O = a ribonucleoside + phosphate. Functionally, nucleotidase that shows phosphatase activity on nucleoside 5'-monophosphates. In Helicobacter pylori (strain J99 / ATCC 700824) (Campylobacter pylori J99), this protein is 5'-nucleotidase SurE.